The following is a 283-amino-acid chain: Pantothenate synthetase (283 aa).

30-37 (MGNLHDGH) provides a ligand contact to ATP. Histidine 37 acts as the Proton donor in catalysis. Residue glutamine 61 participates in (R)-pantoate binding. Glutamine 61 is a binding site for beta-alanine. An ATP-binding site is contributed by 149–152 (GEKD). Glutamine 155 provides a ligand contact to (R)-pantoate. 186–189 (LSSR) contacts ATP.

The protein belongs to the pantothenate synthetase family. In terms of assembly, homodimer.

The protein resides in the cytoplasm. The catalysed reaction is (R)-pantoate + beta-alanine + ATP = (R)-pantothenate + AMP + diphosphate + H(+). It participates in cofactor biosynthesis; (R)-pantothenate biosynthesis; (R)-pantothenate from (R)-pantoate and beta-alanine: step 1/1. Catalyzes the condensation of pantoate with beta-alanine in an ATP-dependent reaction via a pantoyl-adenylate intermediate. The polypeptide is Pantothenate synthetase (Escherichia coli O6:H1 (strain CFT073 / ATCC 700928 / UPEC)).